The chain runs to 391 residues: Tumor susceptibility gene 101 protein (391 aa).

At alanine 2 the chain carries N-acetylalanine. Positions alanine 2–proline 145 constitute a UEV domain. The tract at residues proline 159–serine 163 is interaction with CEP55. Positions tyrosine 197–glycine 220 are disordered. Residues threonine 200–glycine 215 are compositionally biased toward polar residues. A Phosphothreonine modification is found at threonine 221. The stretch at aspartate 237–glutamate 317 forms a coiled coil. The PTAP/PSAP motif signature appears at proline 321–proline 324. Residues alanine 323–tyrosine 391 form the SB domain.

It belongs to the ubiquitin-conjugating enzyme family. UEV subfamily. In terms of assembly, component of the ESCRT-I complex (endosomal sorting complex required for transport I) which consists of TSG101, VPS28, a VPS37 protein (VPS37A to -D) and MVB12A or MVB12B in a 1:1:1:1 stoichiometry. Interacts with VPS37A, VPS37B and VPS37C. Component of an ESCRT-I complex (endosomal sorting complex required for transport I) which consists of TSG101, VPS28, VPS37A and UBAP1 in a 1:1:1:1 stoichiometry. Interacts with DMAP1. Interacts with GMCL. Interacts with ubiquitin, stathmin and AATF. Interacts with HGS; the interaction mediates the association with the ESCRT-0 complex. Interacts with GGA1 and GGA3. Interacts (via UEV domain) with PDCD6IP/AIP1. Interacts with VPS28, SNF8 and VPS36. Self-associates. Interacts with MVB12A; the association appears to be mediated by the TSG101-VPS37 binary subcomplex. Interacts with VPS37D. Interacts with LRSAM1. Interacts with CEP55; the interaction is required for cytokinesis. Interacts with PDCD6. Interacts with LITAF. Interacts with murine leukemia virus Gag polyprotein (via PSAP motif). Interacts with MGRN1. Interacts with ARRDC1; recruits TSG101 to the plasma membrane. Monoubiquitinated at multiple sites by LRSAM1 and by MGRN1. Ubiquitination inactivates it, possibly by regulating its shuttling between an active membrane-bound protein and an inactive soluble form. Ubiquitination by MGRN1 requires the presence of UBE2D1. In terms of tissue distribution, ubiquitous. Higher expression in brain and mammary gland. Lower expression in liver and tumoral tissues.

The protein resides in the cytoplasm. It localises to the early endosome membrane. It is found in the late endosome membrane. The protein localises to the cytoskeleton. Its subcellular location is the microtubule organizing center. The protein resides in the centrosome. It localises to the midbody. It is found in the midbody ring. The protein localises to the nucleus. Its function is as follows. Component of the ESCRT-I complex, a regulator of vesicular trafficking process. Binds to ubiquitinated cargo proteins and is required for the sorting of endocytic ubiquitinated cargos into multivesicular bodies (MVBs). Mediates the association between the ESCRT-0 and ESCRT-I complex. Required for completion of cytokinesis; the function requires CEP55. May be involved in cell growth and differentiation. Acts as a negative growth regulator. Required for the exosomal release of SDCBP, CD63 and syndecan. It may also play a role in the extracellular release of microvesicles that differ from the exosomes. The chain is Tumor susceptibility gene 101 protein (Tsg101) from Mus musculus (Mouse).